A 318-amino-acid chain; its full sequence is Transaldolase (318 aa).

Catalysis depends on lysine 132, which acts as the Schiff-base intermediate with substrate.

The protein belongs to the transaldolase family. Type 1 subfamily. In terms of assembly, homodimer.

It is found in the cytoplasm. The enzyme catalyses D-sedoheptulose 7-phosphate + D-glyceraldehyde 3-phosphate = D-erythrose 4-phosphate + beta-D-fructose 6-phosphate. It participates in carbohydrate degradation; pentose phosphate pathway; D-glyceraldehyde 3-phosphate and beta-D-fructose 6-phosphate from D-ribose 5-phosphate and D-xylulose 5-phosphate (non-oxidative stage): step 2/3. In terms of biological role, transaldolase is important for the balance of metabolites in the pentose-phosphate pathway. The polypeptide is Transaldolase (Shewanella sp. (strain MR-4)).